The sequence spans 94 residues: Putative pterin-4-alpha-carbinolamine dehydratase (94 aa).

The protein belongs to the pterin-4-alpha-carbinolamine dehydratase family.

It catalyses the reaction (4aS,6R)-4a-hydroxy-L-erythro-5,6,7,8-tetrahydrobiopterin = (6R)-L-erythro-6,7-dihydrobiopterin + H2O. The sequence is that of Putative pterin-4-alpha-carbinolamine dehydratase from Mycobacterium sp. (strain JLS).